The primary structure comprises 337 residues: TGEKPFDCTECGKSFTDLKTLQHHYKIHTGEKPFICAECGKGFNQKTTLLNHSKIHTTEKPFPCTECGKCFTERKTLLNHNKIHTGEKPFICAECGIGFTQKTTLLNHSKIHTTEKPFPCTECGKCFTERKTLLNHNKIHTGEKPFICAECGIGFTQKTTLLNHSKIHTTEKPFPCTECGKCFAEKKTLQNHNKIHTGVKPFTCTDCGKSFTQRTSLQNHVKIHTGEKPFTCTECGKSFSEKKTLREHNKIHTGEKPFTCTYCGKSFSQRISLQNHFKIHTGEKPFSCTECGKCFTIKSTLQSHLKRTHTGEKPFTCTECGKSFTKKKILLKHNKIH.

12 C2H2-type zinc fingers span residues 6–28, 34–56, 62–84, 90–112, 118–140, 146–168, 174–196, 202–224, 230–252, 258–280, 286–309, and 315–337; these read FDCTECGKSFTDLKTLQHHYKIH, FICAECGKGFNQKTTLLNHSKIH, FPCTECGKCFTERKTLLNHNKIH, FICAECGIGFTQKTTLLNHSKIH, FPCTECGKCFAEKKTLQNHNKIH, FTCTDCGKSFTQRTSLQNHVKIH, FTCTECGKSFSEKKTLREHNKIH, FTCTYCGKSFSQRISLQNHFKIH, FSCTECGKCFTIKSTLQSHLKRTH, and FTCTECGKSFTKKKILLKHNKIH.

This sequence belongs to the krueppel C2H2-type zinc-finger protein family.

The protein resides in the nucleus. Its function is as follows. May be involved in transcriptional regulation. In Xenopus laevis (African clawed frog), this protein is Gastrula zinc finger protein XlCGF26.1.